We begin with the raw amino-acid sequence, 157 residues long: MGFPKVERLLINYKTLDEFKKFKGCGAQELSMLEELQANIIENDSESPFYGIYYGGSLIARMSLYMKRNGGEPFEITGTYLELYKLEVLPNFQKQGFGEMLVNYAKGLQFPIKTIARIHSAGFWDKLNFQPVSVPDGDFYVWHPETNLNTVTNEESA.

The region spanning 9–146 (LLINYKTLDE…GDFYVWHPET (138 aa)) is the N-acetyltransferase domain.

This is an uncharacterized protein from Bacillus cereus (strain ZK / E33L).